The chain runs to 25 residues: LASP1 neighbor protein (25 aa).

Residues 4–24 form a helical membrane-spanning segment; that stretch reads IFILMFFAIIGLVILSYIIYL.

It is found in the membrane. Its function is as follows. May play a key role in the skin fibroblasts (FBs)-keratinocyte-like cells (KLCs). The protein is LASP1 neighbor protein of Homo sapiens (Human).